Reading from the N-terminus, the 219-residue chain is HTH-type transcriptional regulator LutR (219 aa).

The HTH gntR-type domain maps to methionine 1 to phenylalanine 56. The segment at residues valine 16–serine 35 is a DNA-binding region (H-T-H motif).

Negatively regulates the transcription of the lutABC operon, which is required for L-lactate utilization. LutR activity is regulated by lactate, since presence of L-lactate, that probably binds to LutR, leads to derepression of the operon. Also appears to be essential for bacilysin biosynthesis. The sequence is that of HTH-type transcriptional regulator LutR (lutR) from Bacillus subtilis (strain 168).